We begin with the raw amino-acid sequence, 471 residues long: Protein hedgehog (471 aa).

Cys-85 carries the N-palmitoyl cysteine lipid modification. 7 residues coordinate Ca(2+): Glu-149, Glu-150, Asp-155, Thr-185, Glu-186, Asp-189, and Asp-191. Gly-257 carries Cholesterol glycine ester lipidation.

The protein belongs to the hedgehog family. Interacts with shf. Interacts with ptc and CG5504/l(2)tid. Post-translationally, the C-terminal part of the hedgehog protein precursor displays an autoproteolysis activity that results in the cleavage of the full-length protein into two parts (N-product and C-product). In addition, the C-terminal part displays a cholesterol transferase activity that results by the covalent attachment of a cholesterol moiety to the C-terminal of the newly generated N-product. The N-product is the active species in both local and long-range signaling, whereas the C-product has no signaling activity. In terms of processing, cholesterylation is required for N-product targeting to lipid rafts and multimerization. N-palmitoylation by Rasp of the hedgehog N-product, within the secretory pathway, is required for the embryonic and larval patterning activities of the hedgehog signal. As to expression, in embryos, expression starts at stage 5 as a few stripes at the anterior and posterior ends, this expands to 17 stripes during stages 8-11. Expression is also seen in CNS and some PNS cells until stage 13-14, and in foregut, hindgut and salivary glands. In larvae, expression is seen in the posterior compartment of the wing, leg and antennal imaginal disks. In adults, high level of expression in specific regions of the proventriculus and hindgut, with slightly lower levels of expression in the posterior midgut. Relatively low levels of expression in the anterior midgut region.

The protein localises to the nucleus. The protein resides in the cytoplasm. It is found in the cell membrane. The enzyme catalyses glycyl-L-cysteinyl-[protein] + cholesterol + H(+) = [protein]-C-terminal glycyl cholesterol ester + N-terminal L-cysteinyl-[protein]. In terms of biological role, the C-terminal part of the hedgehog protein precursor displays an autoproteolysis activity that results in the cleavage of the full-length protein into two parts (N-product and C-product). In addition, the C-terminal part displays a cholesterol transferase activity that results by the covalent attachment of a cholesterol moiety to the C-terminal of the newly generated N-product. Once cleaved, the C-product has no signaling activity and diffuses from the cell. Its function is as follows. The dually lipidated hedgehog protein N-product is a morphogen which is essential for a variety of patterning events during development. Establishes the anterior-posterior axis of the embryonic segments and patterns the larval imaginal disks. Binds to the patched (ptc) receptor, which functions in association with smoothened (smo), to activate the transcription of target genes wingless (wg), decapentaplegic (dpp) and ptc. In the absence of hh, ptc represses the constitutive signaling activity of smo through fused (fu). Essential component of a signaling pathway which regulates the Duox-dependent gut immune response to bacterial uracil; required to activate Cad99C-dependent endosome formation, norpA-dependent Ca2+ mobilization and p38 MAPK, which are essential steps in the Duox-dependent production of reactive oxygen species (ROS) in response to intestinal bacterial infection. During photoreceptor differentiation, it up-regulates transcription of Ubr3, which in turn promotes the hh-signaling pathway by mediating the ubiquitination and degradation of cos. The protein is Protein hedgehog of Drosophila melanogaster (Fruit fly).